Reading from the N-terminus, the 150-residue chain is N-alpha-acetyltransferase 30 (150 aa).

One can recognise an N-acetyltransferase domain in the interval 2 to 150 (VTIVPYSHQY…DAFRYILYPN (149 aa)).

Belongs to the acetyltransferase family. MAK3 subfamily.

Its subcellular location is the cytoplasm. It is found in the nucleus. The catalysed reaction is N-terminal L-methionyl-L-leucyl-[protein] + acetyl-CoA = N-terminal N(alpha)-acetyl-L-methionyl-L-leucyl-[protein] + CoA + H(+). It catalyses the reaction N-terminal L-methionyl-L-isoleucyl-[protein] + acetyl-CoA = N-terminal N(alpha)-acetyl-L-methionyl-L-isoleucyl-[protein] + CoA + H(+). It carries out the reaction N-terminal L-methionyl-L-phenylalanyl-[protein] + acetyl-CoA = N-terminal N(alpha)-acetyl-L-methionyl-L-phenylalanyl-[protein] + CoA + H(+). The enzyme catalyses N-terminal L-methionyl-L-tryptophyl-[protein] + acetyl-CoA = N-terminal N(alpha)-acetyl-L-methionyl-L-tryptophyl-[protein] + CoA + H(+). The catalysed reaction is N-terminal L-methionyl-L-tyrosyl-[protein] + acetyl-CoA = N-terminal N(alpha)-acetyl-L-methionyl-L-tyrosyl-[protein] + CoA + H(+). Functionally, catalytic component of the NatC N-terminal acetyltransferase. This is N-alpha-acetyltransferase 30 (naa30) from Schizosaccharomyces pombe (strain 972 / ATCC 24843) (Fission yeast).